The following is a 157-amino-acid chain: uncharacterized protein (157 aa).

Positions 1–23 (MEALRRAHEATLRLLLCRPWASG) are cleaved as a signal peptide.

Its subcellular location is the secreted. This is an uncharacterized protein from Mus musculus (Mouse).